Consider the following 544-residue polypeptide: MTPTELKRLYRIIKVQLEYGLDDLLPDHQLAKAPRWMRKSLFWLKNQHPEKPLGDRLRLALQELGPVWIKFGQMLSTRRDLFPPHIADPLALLQDQVSPFDGALAKAQMEQALGGPLETWFSDFDLVPLASASIAQVHTAKLKTTNQEVVLKVIRPDIRPIIDADLKLMRRMASIVAKAMPEARRLKPIEVVREYEKTLLDELDLRREAANAIQLRRNFTDSEELYVPEVYPDFSNETVMVSERIYGIQVSDITGLKANGTNMKLLAERGVSVFFTQVFRDSFFHADMHPGNVFVNPEHPENPQWIGLDCGIVGTLNSEDKRYLAENFLAFFNRDYRRVAELHVDSGWVPADTNIDEFEFAIRIVCEPIFAKPLCEISFGHVLLNLFNTARRFNMEVQPQLVLLQKTLLYVEGLGRQLYPQLDLWETAKPFLEEWMMNQVGPKALINAIKDRAPYWAEKLPELPELLYDSLKQGKAMNQRMDQLYQGYRASKRQQATGKFLFGVGATLVVCSAILVDHTYEQLSLATAIAGVTFWLFSWRAYRR.

Residues 123–501 (DFDLVPLASA…KRQQATGKFL (379 aa)) form the Protein kinase domain. ATP is bound by residues 129–137 (LASASIAQV) and Lys152. The Proton acceptor role is filled by Asp287. 2 helical membrane-spanning segments follow: residues 496 to 516 (ATGK…AILV) and 519 to 539 (TYEQ…LFSW).

Belongs to the ABC1 family. UbiB subfamily.

The protein resides in the cell inner membrane. It functions in the pathway cofactor biosynthesis; ubiquinone biosynthesis [regulation]. In terms of biological role, is probably a protein kinase regulator of UbiI activity which is involved in aerobic coenzyme Q (ubiquinone) biosynthesis. The sequence is that of Probable protein kinase UbiB from Vibrio vulnificus (strain YJ016).